The sequence spans 166 residues: Lactose-binding lectin l-2 (166 aa).

Positions 1-24 (MVSFKLPAFLCVAVLSSMALVSHG) are cleaved as a signal peptide. Intrachain disulfides connect Cys34–Cys45, Cys62–Cys160, and Cys136–Cys152. A C-type lectin domain is found at 41-161 (HKNRCYLHVA…CDLLFPSICV (121 aa)).

As to quaternary structure, homodimer; disulfide-linked. Skin; contained within club cells which are a component of the epidermis in combination with epithelial cells and mucus cells (at protein level).

It localises to the secreted. Functionally, involved in host defense at the body surface. Causes agglutination and suppresses the growth of the Gram-negative bacterium E.coli K12. Possesses calcium-independent hemagglutinating activity. This is Lactose-binding lectin l-2 from Anguilla japonica (Japanese eel).